The sequence spans 247 residues: O-methyltransferase imqG (247 aa).

S-adenosyl-L-methionine contacts are provided by residues Glu-84, 86-87 (GT), and Ala-138. A divalent metal cation is bound by residues Asp-163, Asp-189, and Asn-190. Asp-163 is a substrate binding site.

This sequence belongs to the class I-like SAM-binding methyltransferase superfamily. Cation-dependent O-methyltransferase family. CCoAMT subfamily. As to quaternary structure, homodimer. A divalent metal cation is required as a cofactor.

The protein operates within secondary metabolite biosynthesis. Functionally, O-methyltransferase; part of the gene cluster that mediates the biosynthesis of imizoquins A to D, tripeptide-derived alkaloids that serve a protective role against oxidative stress that are essential for normal germination. ImqB is a canonical three-module NRPS that assembles the tripeptide backbone of the imizoquins via condensation of Trp, Tyr, and Leu-derived precursors. N-methylation by imqF and phenol oxidation by imqC, followed by cyclization via the FAD-dependent oxidase imqH carry out the three-step transformation of L-tyrosine into tetrahydroisoquinoline. Importantly, this sequence requires the presence of a free amine in the tyrosine moiety, indicating that isoquinoline formation occurs prior to peptide bond formation. The imidazolidin-4-one ring of imizoquins could form following additional oxidation of the methyl-derived bridgehead carbon by imqH. Lastly, O-methylation by imqG and leucine hydroxylation by imqE complete biosynthesis of the imizoquins. This Aspergillus flavus (strain ATCC 200026 / FGSC A1120 / IAM 13836 / NRRL 3357 / JCM 12722 / SRRC 167) protein is O-methyltransferase imqG.